A 164-amino-acid polypeptide reads, in one-letter code: Large ribosomal subunit protein uL15 (164 aa).

The span at 1–14 (MKLNEIQDNPGSSK) shows a compositional bias: polar residues. The segment at 1–35 (MKLNEIQDNPGSSKSRMRVGRGIGSGKGKTCGRGV) is disordered. Residues 21 to 35 (RGIGSGKGKTCGRGV) are compositionally biased toward gly residues.

This sequence belongs to the universal ribosomal protein uL15 family. In terms of assembly, part of the 50S ribosomal subunit.

Binds to the 23S rRNA. The polypeptide is Large ribosomal subunit protein uL15 (Methylocella silvestris (strain DSM 15510 / CIP 108128 / LMG 27833 / NCIMB 13906 / BL2)).